A 154-amino-acid chain; its full sequence is CASP-like protein ARALYDRAFT_485429 (154 aa).

Residues 1-12 lie on the Cytoplasmic side of the membrane; that stretch reads MENVPGSFGTSA. A helical membrane pass occupies residues 13–33; the sequence is SFALRFGQTIFSAASLIFMCF. At 34 to 41 the chain is on the extracellular side; it reads DYDFYDFT. The chain crosses the membrane as a helical span at residues 42 to 62; sequence TFCYLATVMAIVTPWSILLAL. Over 63–81 the chain is Cytoplasmic; that stretch reads TDTYSVLVKLLPQELRVLS. A helical transmembrane segment spans residues 82 to 102; it reads IVFAGDFVLSFLSLGGACAVA. The Extracellular segment spans residues 103-128; the sequence is SATELLASADGKICDGNLCIQYQVSA. The chain crosses the membrane as a helical span at residues 129–149; the sequence is ALAFLCWFLLLASALFNFWSL. Topologically, residues 150–154 are cytoplasmic; the sequence is PSLYY.

This sequence belongs to the Casparian strip membrane proteins (CASP) family. As to quaternary structure, homodimer and heterodimers.

It localises to the cell membrane. The sequence is that of CASP-like protein ARALYDRAFT_485429 from Arabidopsis lyrata subsp. lyrata (Lyre-leaved rock-cress).